Consider the following 238-residue polypeptide: Fish-egg lectin (238 aa).

5 tandem repeats follow at residues 1 to 34 (LDCT…VLID), 35 to 68 (NVFT…KYQS), 69 to 106 (GGFV…MDAN), 107 to 156 (NKWP…CSGS), and 157 to 199 (GSFI…KPDG). A 5 X approximate tandem repeats region spans residues 1–199 (LDCTVIDGNL…TGVTRSKPDG (199 aa)). 4 disulfide bridges follow: C3–C234, C100–C153, C128–C133, and C208–C226. N27 carries an N-linked (GlcNAc...) asparagine glycan.

This sequence belongs to the tectonin family. In terms of tissue distribution, expressed in the eggs.

The protein localises to the secreted. Functionally, lipopolysaccharide-binding protein with a very low agglutinating activity for human A-type erythrocytes and interacts with both Gram-positive and Gram-negative bacteria. The polypeptide is Fish-egg lectin (Cyprinus carpio (Common carp)).